A 320-amino-acid polypeptide reads, in one-letter code: MARNKIALIGAGQIGGTLAHLAGLKELGDIVLFDIAEGTPQGKALDLAESAPVDGFNAHLSGANDYSAIEGADVVIVTAGVPRKPGMSRDDLLGINLKVMESVGAGIKTYAKDAFVICITNPLDAMVWALQKASGLPPQKVVGMAGVLDSARFRYFLSDEFKVSVEDVTAFVLGGHGDDMVPLLRYSTVAGIPLPDLVKIGWTTQEKLDAIVKRTRGGGGEIVNLLKTGSAFYAPAASAIAMAESYLKDKRRVLPVAAQLNGEYGVDKLYVGVPVVIGANGVEKVVEITLDDAEKELFKKSVASVQGLVEACKTINPAFA.

NAD(+) is bound by residues 10–15 (GAGQIG) and Asp-34. Residues Arg-83 and Arg-89 each contribute to the substrate site. NAD(+) contacts are provided by residues Asn-96 and 119–121 (ITN). Asn-121 and Arg-152 together coordinate substrate. His-176 acts as the Proton acceptor in catalysis.

The protein belongs to the LDH/MDH superfamily. MDH type 3 family.

The enzyme catalyses (S)-malate + NAD(+) = oxaloacetate + NADH + H(+). Catalyzes the reversible oxidation of malate to oxaloacetate. In Beijerinckia indica subsp. indica (strain ATCC 9039 / DSM 1715 / NCIMB 8712), this protein is Malate dehydrogenase.